Consider the following 34-residue polypeptide: Dermaseptin-S2 (34 aa).

This sequence belongs to the frog skin active peptide (FSAP) family. Dermaseptin subfamily. Expressed by the skin glands.

It is found in the secreted. Functionally, potent antimicrobial peptide with activity against bacteria and protozoa. Also has activity against fungi. Probably acts by disturbing membrane functions with its amphipathic structure. The chain is Dermaseptin-S2 from Phyllomedusa sauvagei (Sauvage's leaf frog).